A 1502-amino-acid chain; its full sequence is Gem-associated protein 5 (1502 aa).

Residues 1 to 124 form an important for interaction with U1 snRNA region; sequence MKPEPRTLPP…LHWSPTVKDL (124 aa). Residues 13 to 15 form an interaction with U4 snRNA region; it reads NWY. The residue at position 48 (Ser48) is a Phosphoserine. 11 WD repeats span residues 62–104, 107–148, 150–189, 193–264, 280–321, 333–374, 377–417, 424–464, 468–509, 533–573, and 576–622; these read GHTE…VVTE, LHQH…QHLF, EPRTIFCLTCSPHHENLVAIGYKDGIVVIIDISKKGEVIH, GHDD…GVMV, TVKE…RRKY, HSRI…CCWT, SLGG…NNYD, GVKS…PPQI, YHKK…VVLQ, RYKL…LLCT, and QHHK…ESNP. At Ser624 the chain carries Phosphoserine. 2 WD repeats span residues 637-677 and 680-720; these read GHTA…PLFN and GHRG…HSRP. 2 disordered regions span residues 740-797 and 819-838; these read KLKK…SPVV and SSKATSLKKEPAKEKPEALL. A Glycyl lysine isopeptide (Lys-Gly) (interchain with G-Cter in SUMO2) cross-link involves residue Lys754. Ser757, Ser770, and Ser778 each carry phosphoserine. The span at 825-838 shows a compositional bias: basic and acidic residues; that stretch reads LKKEPAKEKPEALL. At Ser845 the chain carries Phosphoserine. Disordered regions lie at residues 1309–1338 and 1378–1427; these read VSDKQSKPEDSASAEDMEQPPGPGPRLSAE and HQKS…SLPE. The stretch at 1355 to 1382 forms a coiled coil; it reads ASLQTSQRTVAEVQETLAEMIRQHQKSQ. Residues 1380 to 1391 show a composition bias toward polar residues; the sequence is KSQLCKATTNGP. Positions 1392–1407 are enriched in basic and acidic residues; sequence SRDEPSRDEPSQEAER.

This sequence belongs to the WD repeat gemin-5 family. In terms of assembly, part of the core SMN complex that contains SMN1, GEMIN2/SIP1, DDX20/GEMIN3, GEMIN4, GEMIN5, GEMIN6, GEMIN7, GEMIN8 and STRAP/UNRIP. Part of the SMN-Sm complex that contains SMN1, GEMIN2/SIP1, DDX20/GEMIN3, GEMIN4, GEMIN5, GEMIN6, GEMIN7, GEMIN8, STRAP/UNRIP and the Sm proteins SNRPB, SNRPD1, SNRPD2, SNRPD3, SNRPE, SNRPF and SNRPG. Interacts directly with SMN1, SNRPB, SNRPD1, SNRPD2, SNRPD3 and SNRPE. Identified in a SMN complex that contains GEMIN2/SIP1. Interacts with cytosolic DDX20/GEMIN3 and GEMIN4. Interacts with SNRNP70 and HNRNPU. Identified in a complex with 80S ribosomes; binds to the 60S large ribosomal subunit. Interacts with the ribosomal subunits RPL3 and RPL4.

It is found in the nucleus. It localises to the nucleoplasm. Its subcellular location is the gem. The protein localises to the cytoplasm. Functionally, the SMN complex catalyzes the assembly of small nuclear ribonucleoproteins (snRNPs), the building blocks of the spliceosome, and thereby plays an important role in the splicing of cellular pre-mRNAs. Most spliceosomal snRNPs contain a common set of Sm proteins SNRPB, SNRPD1, SNRPD2, SNRPD3, SNRPE, SNRPF and SNRPG that assemble in a heptameric protein ring on the Sm site of the small nuclear RNA to form the core snRNP (Sm core). In the cytosol, the Sm proteins SNRPD1, SNRPD2, SNRPE, SNRPF and SNRPG are trapped in an inactive 6S pICln-Sm complex by the chaperone CLNS1A that controls the assembly of the core snRNP. To assemble core snRNPs, the SMN complex accepts the trapped 5Sm proteins from CLNS1A forming an intermediate. Binding of snRNA inside 5Sm ultimately triggers eviction of the SMN complex, thereby allowing binding of SNRPD3 and SNRPB to complete assembly of the core snRNP. Within the SMN complex, GEMIN5 recognizes and delivers the small nuclear RNAs (snRNAs) to the SMN complex. Binds to the 7-methylguanosine cap of RNA molecules. Binds to the 3'-UTR of SMN1 mRNA and regulates its translation; does not affect mRNA stability. May play a role in the regulation of protein synthesis via its interaction with ribosomes. In Mus musculus (Mouse), this protein is Gem-associated protein 5 (Gemin5).